The following is a 122-amino-acid chain: Large ribosomal subunit protein bL12 (122 aa).

This sequence belongs to the bacterial ribosomal protein bL12 family. In terms of assembly, homodimer. Part of the ribosomal stalk of the 50S ribosomal subunit. Forms a multimeric L10(L12)X complex, where L10 forms an elongated spine to which 2 to 4 L12 dimers bind in a sequential fashion. Binds GTP-bound translation factors.

In terms of biological role, forms part of the ribosomal stalk which helps the ribosome interact with GTP-bound translation factors. Is thus essential for accurate translation. The sequence is that of Large ribosomal subunit protein bL12 from Glaesserella parasuis serovar 5 (strain SH0165) (Haemophilus parasuis).